The chain runs to 103 residues: N(4)-acetylcytidine amidohydrolase (103 aa).

One can recognise an ASCH domain in the interval 6 to 101 (ITFFQRFQDD…QTQFYVIEFK (96 aa)). K21 acts as the Proton acceptor in catalysis. The active-site Nucleophile is T24. E74 (proton donor) is an active-site residue.

This sequence belongs to the N(4)-acetylcytidine amidohydrolase family.

It carries out the reaction N(4)-acetylcytidine + H2O = cytidine + acetate + H(+). It catalyses the reaction N(4)-acetyl-2'-deoxycytidine + H2O = 2'-deoxycytidine + acetate + H(+). The enzyme catalyses N(4)-acetylcytosine + H2O = cytosine + acetate + H(+). Catalyzes the hydrolysis of N(4)-acetylcytidine (ac4C). The chain is N(4)-acetylcytidine amidohydrolase (yqfB) from Escherichia coli O127:H6 (strain E2348/69 / EPEC).